The following is a 467-amino-acid chain: Probable citrate synthase 2, mitochondrial (467 aa).

Residues histidine 303, histidine 349, and aspartate 404 contribute to the active site.

This sequence belongs to the citrate synthase family. In terms of assembly, homodimer.

The protein localises to the mitochondrion matrix. The catalysed reaction is oxaloacetate + acetyl-CoA + H2O = citrate + CoA + H(+). The protein operates within carbohydrate metabolism; tricarboxylic acid cycle; isocitrate from oxaloacetate: step 1/2. The sequence is that of Probable citrate synthase 2, mitochondrial from Aedes aegypti (Yellowfever mosquito).